The chain runs to 905 residues: Translation initiation factor IF-2 (905 aa).

Positions 50 to 62 (HYEAKGGEDKAAE) are enriched in basic and acidic residues. Residues 50–306 (HYEAKGGEDK…QKHEVGGVRL (257 aa)) form a disordered region. Residues 63 to 75 (KNAPAATPASASK) show a composition bias toward low complexity. Residues 89–125 (GPKPSAAPKPGAAPKPGGAPKPGGAPKPGATPKPGGA) are compositionally biased toward pro residues. Residues 161–171 (PFSTGSSSDRP) show a composition bias toward low complexity. Over residues 233-276 (GSGGGGRGRGGRGGGPGHGGPGHGGFRGRGGRRGGTAGAFGRPG) the composition is skewed to gly residues. Residues 280 to 290 (RRGKKSKRQKR) are compositionally biased toward basic residues. Residues 291–302 (HEFEEQQKHEVG) are compositionally biased toward basic and acidic residues. In terms of domain architecture, tr-type G spans 401-575 (KRPPVVTVMG…LTADAALELT (175 aa)). A G1 region spans residues 410–417 (GHVDHGKT). GTP is bound at residue 410-417 (GHVDHGKT). Positions 435–439 (GITQG) are G2. Positions 460–463 (DTPG) are G3. Residues 460 to 464 (DTPGH) and 514 to 517 (NKID) each bind GTP. The tract at residues 514 to 517 (NKID) is G4. Positions 550–552 (SAK) are G5.

The protein belongs to the TRAFAC class translation factor GTPase superfamily. Classic translation factor GTPase family. IF-2 subfamily.

Its subcellular location is the cytoplasm. One of the essential components for the initiation of protein synthesis. Protects formylmethionyl-tRNA from spontaneous hydrolysis and promotes its binding to the 30S ribosomal subunits. Also involved in the hydrolysis of GTP during the formation of the 70S ribosomal complex. The sequence is that of Translation initiation factor IF-2 from Corynebacterium aurimucosum (strain ATCC 700975 / DSM 44827 / CIP 107346 / CN-1) (Corynebacterium nigricans).